A 298-amino-acid polypeptide reads, in one-letter code: uncharacterized protein (298 aa).

The next 8 membrane-spanning stretches (helical) occupy residues Ser-5–Trp-25, Val-52–Leu-72, Leu-105–Val-125, Ile-138–Leu-158, Ile-163–Ala-183, Gly-208–Thr-228, Leu-236–Ile-256, and Gly-273–Ile-293.

The protein belongs to the CDS family.

It localises to the cell membrane. This is an uncharacterized protein from Escherichia coli (strain K12).